The sequence spans 58 residues: PGPCCKDKCECAEGGCKTGCKCTSCRCAPCEKCTSGCKCPSKDECAKTCSKPCSCCXX.

A beta region spans residues 1 to 28; sequence PGPCCKDKCECAEGGCKTGCKCTSCRCA. Cysteine 4, cysteine 5, cysteine 9, cysteine 11, cysteine 16, cysteine 20, cysteine 22, cysteine 25, cysteine 27, cysteine 30, cysteine 33, cysteine 37, cysteine 39, cysteine 45, cysteine 49, cysteine 53, cysteine 55, and cysteine 56 together coordinate a divalent metal cation. The segment at 29-58 is alpha; the sequence is PCEKCTSGCKCPSKDECAKTCSKPCSCCXX.

Belongs to the metallothionein superfamily. Type 3 family.

Its function is as follows. Metallothioneins have a high content of cysteine residues that bind various heavy metals. The different forms of lobster metallothioneins may have different biological functions. Class I MTS in marine crustacea are involved in the sequestration of elevated levels of heavy-metal ions. Binds 6 metal ions. Known to bind cadmium. The protein is Metallothionein-1 of Homarus americanus (American lobster).